The chain runs to 37 residues: Large ribosomal subunit protein bL36c (37 aa).

The protein belongs to the bacterial ribosomal protein bL36 family.

The protein localises to the plastid. Its subcellular location is the chloroplast. This Phaseolus angularis (Azuki bean) protein is Large ribosomal subunit protein bL36c.